The primary structure comprises 101 residues: Small ribosomal subunit protein uS14 (101 aa).

The protein belongs to the universal ribosomal protein uS14 family. As to quaternary structure, part of the 30S ribosomal subunit. Contacts proteins S3 and S10.

In terms of biological role, binds 16S rRNA, required for the assembly of 30S particles and may also be responsible for determining the conformation of the 16S rRNA at the A site. The chain is Small ribosomal subunit protein uS14 from Vibrio campbellii (strain ATCC BAA-1116).